We begin with the raw amino-acid sequence, 320 residues long: Cytochrome f (320 aa).

Residues 1–35 (MQIRNTFSSLKGEITRFISVSLMIYIITRASISNA) form the signal peptide. Heme contacts are provided by Y36, C56, C59, and H60. Residues 286–306 (VQGLLFFLASVVLAQIFLVLK) form a helical membrane-spanning segment.

It belongs to the cytochrome f family. As to quaternary structure, the 4 large subunits of the cytochrome b6-f complex are cytochrome b6, subunit IV (17 kDa polypeptide, petD), cytochrome f and the Rieske protein, while the 4 small subunits are PetG, PetL, PetM and PetN. The complex functions as a dimer. It depends on heme as a cofactor.

Its subcellular location is the plastid. The protein localises to the chloroplast thylakoid membrane. Component of the cytochrome b6-f complex, which mediates electron transfer between photosystem II (PSII) and photosystem I (PSI), cyclic electron flow around PSI, and state transitions. The protein is Cytochrome f of Citrus sinensis (Sweet orange).